Here is a 170-residue protein sequence, read N- to C-terminus: MDFKSKIRTVDDFPKPGISFKDITTLLKDGEAFHAAIETMAAHFEPLGINMVTGPEARGYIFASALAFRLRAGFVPIRKPGKLPWKTRSISYQLEYGEDRLEVHEDAFQPGQKVLVVDDLLATGGTIRATIDLVESLGAKVVGVAVLIELSDLGGRKRLEGHDVISLVQF.

This sequence belongs to the purine/pyrimidine phosphoribosyltransferase family. In terms of assembly, homodimer.

It is found in the cytoplasm. It carries out the reaction AMP + diphosphate = 5-phospho-alpha-D-ribose 1-diphosphate + adenine. Its pathway is purine metabolism; AMP biosynthesis via salvage pathway; AMP from adenine: step 1/1. Its function is as follows. Catalyzes a salvage reaction resulting in the formation of AMP, that is energically less costly than de novo synthesis. This is Adenine phosphoribosyltransferase from Symbiobacterium thermophilum (strain DSM 24528 / JCM 14929 / IAM 14863 / T).